Reading from the N-terminus, the 185-residue chain is Ribosome-recycling factor (185 aa).

It belongs to the RRF family.

It localises to the cytoplasm. Its function is as follows. Responsible for the release of ribosomes from messenger RNA at the termination of protein biosynthesis. May increase the efficiency of translation by recycling ribosomes from one round of translation to another. The sequence is that of Ribosome-recycling factor from Shewanella loihica (strain ATCC BAA-1088 / PV-4).